The chain runs to 341 residues: Cyanuric acid amidohydrolase (341 aa).

The segment at Met1–Gly90 is RU A. Substrate is bound by residues Arg51 and Ser71–Gly72. Positions Gly95–Ser229 are RU B. The active site involves Lys144. Substrate-binding positions include Arg176 and Ser212–Ser213. Ser212 serves as the catalytic Nucleophile. An RU C region spans residues Leu235–Ile341. Glu273 is a Mg(2+) binding site. Substrate contacts are provided by residues Arg300 and Ser319–Gly320. Residues Ala322, Gln325, Gly326, Pro327, and Gly330 each contribute to the Mg(2+) site.

It belongs to the cyclic amide hydrolase (CyAH) family. As to quaternary structure, homotetramer.

It catalyses the reaction cyanurate + H2O = 1-carboxybiuret + H(+). It functions in the pathway xenobiotic degradation; atrazine degradation; biuret from cyanurate: step 1/1. With respect to regulation, inhibited by barbituric acid. Responsible for the hydrolysis of cyanuric acid, an intermediate formed during catabolism of s-triazine based compounds in herbicides such as atrazine and polymers such as melamine. Catalyzes the hydrolytic opening of the s-triazine ring of cyanuric acid (2,4,6-trihydroxy-s-triazine) to yield carbon dioxide and carboxybiuret, which spontaneously decarboxylates to biuret. Only active on cyanuric acid and N-methylisocyanuric acid. This chain is Cyanuric acid amidohydrolase, found in Sarocladium sp.